A 587-amino-acid chain; its full sequence is 2-succinyl-5-enolpyruvyl-6-hydroxy-3-cyclohexene-1-carboxylate synthase (587 aa).

This sequence belongs to the TPP enzyme family. MenD subfamily. As to quaternary structure, homodimer. It depends on Mg(2+) as a cofactor. Requires Mn(2+) as cofactor. Thiamine diphosphate serves as cofactor.

The enzyme catalyses isochorismate + 2-oxoglutarate + H(+) = 5-enolpyruvoyl-6-hydroxy-2-succinyl-cyclohex-3-ene-1-carboxylate + CO2. It functions in the pathway quinol/quinone metabolism; 1,4-dihydroxy-2-naphthoate biosynthesis; 1,4-dihydroxy-2-naphthoate from chorismate: step 2/7. The protein operates within cofactor biosynthesis; phylloquinone biosynthesis. In terms of biological role, catalyzes the thiamine diphosphate-dependent decarboxylation of 2-oxoglutarate and the subsequent addition of the resulting succinic semialdehyde-thiamine pyrophosphate anion to isochorismate to yield 2-succinyl-5-enolpyruvyl-6-hydroxy-3-cyclohexene-1-carboxylate (SEPHCHC). In Prochlorococcus marinus (strain MIT 9215), this protein is 2-succinyl-5-enolpyruvyl-6-hydroxy-3-cyclohexene-1-carboxylate synthase.